The following is a 166-amino-acid chain: Protein-export protein SecB (166 aa).

This sequence belongs to the SecB family. In terms of assembly, homotetramer, a dimer of dimers. One homotetramer interacts with 1 SecA dimer.

It is found in the cytoplasm. Its function is as follows. One of the proteins required for the normal export of preproteins out of the cell cytoplasm. It is a molecular chaperone that binds to a subset of precursor proteins, maintaining them in a translocation-competent state. It also specifically binds to its receptor SecA. The protein is Protein-export protein SecB of Sinorhizobium fredii (strain NBRC 101917 / NGR234).